The following is a 438-amino-acid chain: MNVKKTENALSLTLKNFIKSESFGGIFLFLNAVLAMVVANSFLKESYFALWHTPFGFQIGDFFIGFSLHNWIDDVLMALFFLMIGLEIKRELLFGELSSFKKASFPVIAAIGGMIAPGLIYFFLNADTPSQHGFGIPMATDIAFALGVIMLLGKRVPTALKVFLITLAVADDLGAIVVIALFYTTNLKFAWLLGALGVVLILAVLNRLNVRSLVPYLLLGVLLWFCVHQSGIHATIAAVILAFMIPVKIPKDSKNVELLELGKRYAETSSGALLTKEQQEILHSIEEKASALQSPLERLEHFLAPISGYFIMPLFAFANAGVSVDSSINLEVDKVLLGVILGLCLGKPLGIFLITFISEKLKITARPKGISWWHILGAGLLAGIGFTMSMFISNLAFTSEHKDAMEVAKIAILLGSLISGIIGALYLFALDKRAALKK.

11 consecutive transmembrane segments (helical) span residues 23 to 43, 62 to 82, 104 to 124, 133 to 153, 162 to 182, 185 to 205, 221 to 241, 302 to 322, 337 to 357, 372 to 392, and 410 to 430; these read FGGI…NSFL, FFIG…LFFL, SFPV…YFFL, GFGI…MLLG, VFLI…IALF, TNLK…LAVL, VLLW…AVIL, FLAP…NAGV, LGVI…ITFI, WWHI…SMFI, and IAIL…LFAL.

Belongs to the NhaA Na(+)/H(+) (TC 2.A.33) antiporter family.

It localises to the cell inner membrane. It carries out the reaction Na(+)(in) + 2 H(+)(out) = Na(+)(out) + 2 H(+)(in). In terms of biological role, na(+)/H(+) antiporter that extrudes sodium in exchange for external protons. This chain is Na(+)/H(+) antiporter NhaA, found in Helicobacter pylori (strain HPAG1).